A 371-amino-acid chain; its full sequence is tRNA-specific 2-thiouridylase MnmA (371 aa).

ATP contacts are provided by residues 16–23 (GMSGGVDS) and M42. The tract at residues 102–104 (NPD) is interaction with target base in tRNA. The active-site Nucleophile is C107. An intrachain disulfide couples C107 to C204. G132 contacts ATP. The tract at residues 154–156 (KDQ) is interaction with tRNA. The Cysteine persulfide intermediate role is filled by C204. The tract at residues 316 to 317 (RY) is interaction with tRNA.

This sequence belongs to the MnmA/TRMU family.

It localises to the cytoplasm. It carries out the reaction S-sulfanyl-L-cysteinyl-[protein] + uridine(34) in tRNA + AH2 + ATP = 2-thiouridine(34) in tRNA + L-cysteinyl-[protein] + A + AMP + diphosphate + H(+). Catalyzes the 2-thiolation of uridine at the wobble position (U34) of tRNA, leading to the formation of s(2)U34. The sequence is that of tRNA-specific 2-thiouridylase MnmA from Shewanella piezotolerans (strain WP3 / JCM 13877).